We begin with the raw amino-acid sequence, 237 residues long: Cysteine-rich venom protein DIS1 (237 aa).

Residues 1–18 (MFVFILLSLAAVLQQSFG) form the signal peptide. The SCP domain occupies 37-165 (VDKHNAFRRS…SYNYFYVCQY (129 aa)). Cystine bridges form between Cys-74–Cys-152, Cys-91–Cys-166, Cys-147–Cys-163, Cys-185–Cys-192, Cys-188–Cys-197, Cys-201–Cys-234, and Cys-219–Cys-232. One can recognise a ShKT domain in the interval 201–234 (CSREDVFMNCKSLVAQSNCQDDYIRKNCPATCFC).

The protein belongs to the CRISP family. Expressed by the venom gland.

The protein localises to the secreted. Weakly blocks contraction of smooth muscle elicited by high potassium-induced depolarization, but does not block caffeine-stimulated contraction. May target voltage-gated calcium channels on smooth muscle. The protein is Cysteine-rich venom protein DIS1 of Dispholidus typus (Boomslang).